The following is a 447-amino-acid chain: C4-dicarboxylate transport protein (447 aa).

The next 8 helical transmembrane spans lie at 19–39 (ILYVQVLVAIVAGVLLGHFYP), 55–75 (LVKMIIAPVIFLTVVTGIAGL), 90–110 (IYFLSFSTLALIIGMIVANVV), 155–175 (AFASGDILQVLFFAVLFGIAL), 199–219 (LVAIVMKAAPLGAFGAMAFTI), 232–252 (MLVGTFYLTSGLFVFVVLGLV), 343–363 (LLLVAMLSSKGAAGITGAGFI), and 366–386 (AATLSVVPSVPVAGMALILGV).

The protein belongs to the dicarboxylate/amino acid:cation symporter (DAACS) (TC 2.A.23) family.

It is found in the cell inner membrane. Its function is as follows. Responsible for the transport of dicarboxylates such as succinate, fumarate, and malate from the periplasm across the membrane. The chain is C4-dicarboxylate transport protein from Rhodospirillum rubrum (strain ATCC 11170 / ATH 1.1.1 / DSM 467 / LMG 4362 / NCIMB 8255 / S1).